The sequence spans 270 residues: Putative ABC transporter ATP-binding protein MG304 (270 aa).

The ABC transporter domain occupies 1–232 (MLQVKNLSFK…LDLFHNHHFN (232 aa)). 36 to 43 (GHNGSGKS) contacts ATP.

The protein belongs to the ABC transporter superfamily.

The protein is Putative ABC transporter ATP-binding protein MG304 of Mycoplasma genitalium (strain ATCC 33530 / DSM 19775 / NCTC 10195 / G37) (Mycoplasmoides genitalium).